The chain runs to 158 residues: 6,7-dimethyl-8-ribityllumazine synthase (158 aa).

5-amino-6-(D-ribitylamino)uracil-binding positions include Phe22, 57 to 59, and 81 to 83; these read AVE and AVI. Residue 86 to 87 participates in (2S)-2-hydroxy-3-oxobutyl phosphate binding; it reads GT. The active-site Proton donor is the His89. Phe114 contributes to the 5-amino-6-(D-ribitylamino)uracil binding site. Arg128 lines the (2S)-2-hydroxy-3-oxobutyl phosphate pocket.

This sequence belongs to the DMRL synthase family. Forms an icosahedral capsid composed of 60 subunits, arranged as a dodecamer of pentamers.

It catalyses the reaction (2S)-2-hydroxy-3-oxobutyl phosphate + 5-amino-6-(D-ribitylamino)uracil = 6,7-dimethyl-8-(1-D-ribityl)lumazine + phosphate + 2 H2O + H(+). The protein operates within cofactor biosynthesis; riboflavin biosynthesis; riboflavin from 2-hydroxy-3-oxobutyl phosphate and 5-amino-6-(D-ribitylamino)uracil: step 1/2. Functionally, catalyzes the formation of 6,7-dimethyl-8-ribityllumazine by condensation of 5-amino-6-(D-ribitylamino)uracil with 3,4-dihydroxy-2-butanone 4-phosphate. This is the penultimate step in the biosynthesis of riboflavin. The protein is 6,7-dimethyl-8-ribityllumazine synthase of Shewanella loihica (strain ATCC BAA-1088 / PV-4).